The primary structure comprises 145 residues: MSETFDVDVLVHATHRASPFHDKAKTLVERFLAGPGLVYLLWPVALGYLRVVTHPTLLGAPLAPEVAVENIEQFTSRPHVRQVGEANGFWPVYRRVADPVKPRGNLVPDAHLVALMRHHGIATIWSHDRDFRKFEGIRIRDPFSG.

D6 and D109 together coordinate Mg(2+). The region spanning 15-141 (HRASPFHDKA…RKFEGIRIRD (127 aa)) is the PINc domain.

Belongs to the PINc/VapC protein family. The cofactor is Mg(2+).

Functionally, toxic component of a type II toxin-antitoxin (TA) system. An RNase. Its cognate antitoxin is VapB48. This is Ribonuclease VapC48 from Mycobacterium tuberculosis (strain CDC 1551 / Oshkosh).